The following is a 293-amino-acid chain: Probable endonuclease 4 (293 aa).

Residues histidine 75, histidine 115, glutamate 153, aspartate 187, histidine 190, histidine 224, aspartate 237, histidine 239, and glutamate 269 each contribute to the Zn(2+) site.

This sequence belongs to the AP endonuclease 2 family. The cofactor is Zn(2+).

It catalyses the reaction Endonucleolytic cleavage to 5'-phosphooligonucleotide end-products.. Endonuclease IV plays a role in DNA repair. It cleaves phosphodiester bonds at apurinic or apyrimidinic (AP) sites, generating a 3'-hydroxyl group and a 5'-terminal sugar phosphate. The sequence is that of Probable endonuclease 4 from Chlamydia pneumoniae (Chlamydophila pneumoniae).